Here is an 887-residue protein sequence, read N- to C-terminus: Lon protease homolog 2, peroxisomal (887 aa).

In terms of domain architecture, Lon N-terminal spans 11-256; the sequence is LGILAFRNKV…KATELVDRHL (246 aa). The tract at residues 72–101 is disordered; sequence YPGGGTDSGERNVKSQPGLSDSRKADGKSQ. Residue 409–416 coordinates ATP; the sequence is GPPGVGKT. The Lon proteolytic domain occupies 693–878; that stretch reads VSNPGVSVGL…EVLEQAFEGG (186 aa). Residues Ser784 and Lys827 contribute to the active site. The Microbody targeting signal signature appears at 885–887; sequence ARL.

The protein belongs to the peptidase S16 family.

It localises to the peroxisome matrix. It carries out the reaction Hydrolysis of proteins in presence of ATP.. In terms of biological role, ATP-dependent serine protease that mediates the selective degradation of misfolded and unassembled polypeptides in the peroxisomal matrix. Necessary for type 2 peroxisome targeting signal (PTS2)-containing protein processing and facilitates peroxisome matrix protein import. The chain is Lon protease homolog 2, peroxisomal from Spinacia oleracea (Spinach).